The chain runs to 660 residues: 1-deoxy-D-xylulose-5-phosphate synthase (660 aa).

Residues His-86 and 127–129 (AHS) contribute to the thiamine diphosphate site. Asp-164 serves as a coordination point for Mg(2+). Thiamine diphosphate-binding positions include 165-166 (GS), Asn-196, Tyr-306, and Glu-388. Mg(2+) is bound at residue Asn-196.

Belongs to the transketolase family. DXPS subfamily. Homodimer. Requires Mg(2+) as cofactor. It depends on thiamine diphosphate as a cofactor.

It catalyses the reaction D-glyceraldehyde 3-phosphate + pyruvate + H(+) = 1-deoxy-D-xylulose 5-phosphate + CO2. Its pathway is metabolic intermediate biosynthesis; 1-deoxy-D-xylulose 5-phosphate biosynthesis; 1-deoxy-D-xylulose 5-phosphate from D-glyceraldehyde 3-phosphate and pyruvate: step 1/1. Its function is as follows. Catalyzes the acyloin condensation reaction between C atoms 2 and 3 of pyruvate and glyceraldehyde 3-phosphate to yield 1-deoxy-D-xylulose-5-phosphate (DXP). In Gluconobacter oxydans (strain 621H) (Gluconobacter suboxydans), this protein is 1-deoxy-D-xylulose-5-phosphate synthase.